Reading from the N-terminus, the 66-residue chain is Phylloseptin-H5 (66 aa).

Residues 1–22 form the signal peptide; it reads MAFLKKSLFLVLFLGLVSLSIC. A propeptide spanning residues 23–44 is cleaved from the precursor; the sequence is EEEKRETEEEENEQEDDDKSEE. Positions 24–44 are disordered; it reads EEKRETEEEENEQEDDDKSEE. Positions 30 to 41 are enriched in acidic residues; that stretch reads EEEENEQEDDDK. Phe65 is modified (phenylalanine amide).

Expressed by the skin glands.

Its subcellular location is the secreted. In terms of biological role, has antibacterial activity against the Gram-negative bacteria E.coli and P.aeruginosa, and the Gram-positive bacterium S.aureus. No hemolytic activity. The polypeptide is Phylloseptin-H5 (psn7) (Pithecopus hypochondrialis (Orange-legged leaf frog)).